The chain runs to 155 residues: Putative pre-16S rRNA nuclease (155 aa).

The protein belongs to the YqgF nuclease family.

It is found in the cytoplasm. In terms of biological role, could be a nuclease involved in processing of the 5'-end of pre-16S rRNA. The protein is Putative pre-16S rRNA nuclease of Xanthomonas euvesicatoria pv. vesicatoria (strain 85-10) (Xanthomonas campestris pv. vesicatoria).